Consider the following 132-residue polypeptide: Fatty acid-binding protein 12 (132 aa).

A fatty acid-binding positions include arginine 107 and 127–129 (RTY).

It belongs to the calycin superfamily. Fatty-acid binding protein (FABP) family. In terms of tissue distribution, highly expressed in adult retina and testis with lower levels in cerebral cortex, kidney and epididymis. In the retina, strongly expressed in the ganglion cell layer and throughout the inner nuclear layer in amacrine and bipolar cells. Not expressed in the outer nuclear layer. In the testis, detected in the seminiferous tubules.

In terms of biological role, may play a role in lipid transport. The chain is Fatty acid-binding protein 12 from Rattus norvegicus (Rat).